Consider the following 91-residue polypeptide: Small ribosomal subunit protein bS18 (91 aa).

This sequence belongs to the bacterial ribosomal protein bS18 family. Part of the 30S ribosomal subunit. Forms a tight heterodimer with protein bS6.

In terms of biological role, binds as a heterodimer with protein bS6 to the central domain of the 16S rRNA, where it helps stabilize the platform of the 30S subunit. The chain is Small ribosomal subunit protein bS18 from Burkholderia lata (strain ATCC 17760 / DSM 23089 / LMG 22485 / NCIMB 9086 / R18194 / 383).